A 54-amino-acid polypeptide reads, in one-letter code: Relaxin (54 aa).

A Pyrrolidone carboxylic acid modification is found at glutamine 1. Cystine bridges form between cysteine 10/cysteine 41, cysteine 22/cysteine 54, and cysteine 40/cysteine 45.

It belongs to the insulin family. Heterodimer of a B chain and an A chain linked by two disulfide bonds.

The protein resides in the secreted. In terms of biological role, relaxin is an ovarian hormone that acts with estrogen to produce dilatation of the birth canal in many mammals. The protein is Relaxin of Balaenoptera acutorostrata (Common minke whale).